A 259-amino-acid chain; its full sequence is Phosphate import ATP-binding protein PstB 1 (259 aa).

Residues 13-254 enclose the ABC transporter domain; the sequence is IQVRGLEFFY…PSKTQTEDYI (242 aa). 45-52 is a binding site for ATP; that stretch reads GPSGCGKS.

Belongs to the ABC transporter superfamily. Phosphate importer (TC 3.A.1.7) family. In terms of assembly, the complex is composed of two ATP-binding proteins (PstB), two transmembrane proteins (PstC and PstA) and a solute-binding protein (PstS).

The protein localises to the cell inner membrane. The catalysed reaction is phosphate(out) + ATP + H2O = ADP + 2 phosphate(in) + H(+). In terms of biological role, part of the ABC transporter complex PstSACB involved in phosphate import. Responsible for energy coupling to the transport system. This is Phosphate import ATP-binding protein PstB 1 from Pseudomonas syringae pv. tomato (strain ATCC BAA-871 / DC3000).